We begin with the raw amino-acid sequence, 99 residues long: uncharacterized protein (99 aa).

Its subcellular location is the mitochondrion. This is an uncharacterized protein from Marchantia polymorpha (Common liverwort).